We begin with the raw amino-acid sequence, 214 residues long: uncharacterized protein (214 aa).

Tyr-129 acts as the Proton acceptor in catalysis.

The protein belongs to the NAD(P)-dependent epimerase/dehydratase family.

This is an uncharacterized protein from Bacillus subtilis (strain 168).